A 408-amino-acid polypeptide reads, in one-letter code: Peptidase T (408 aa).

H78 serves as a coordination point for Zn(2+). The active site involves D80. D140 is a Zn(2+) binding site. Catalysis depends on E173, which acts as the Proton acceptor. Zn(2+) is bound by residues E174, D196, and H379.

Belongs to the peptidase M20B family. Requires Zn(2+) as cofactor.

It is found in the cytoplasm. It carries out the reaction Release of the N-terminal residue from a tripeptide.. Cleaves the N-terminal amino acid of tripeptides. This chain is Peptidase T, found in Citrobacter koseri (strain ATCC BAA-895 / CDC 4225-83 / SGSC4696).